The sequence spans 331 residues: UPF0194 membrane protein CKO_02332 (331 aa).

The signal sequence occupies residues Met1–Ala15. A coiled-coil region spans residues Ile142–Ile207.

Belongs to the UPF0194 family.

Its subcellular location is the periplasm. The protein is UPF0194 membrane protein CKO_02332 of Citrobacter koseri (strain ATCC BAA-895 / CDC 4225-83 / SGSC4696).